The sequence spans 486 residues: Cardiolipin synthase A (486 aa).

2 helical membrane-spanning segments follow: residues 3–23 and 38–58; these read TVYT…IAGV and MAWL…YLAV. PLD phosphodiesterase domains lie at 219-246 and 399-426; these read MDLR…VDPR and EGGL…DMRS. Residues H224, K226, D231, H404, K406, and D411 contribute to the active site.

This sequence belongs to the phospholipase D family. Cardiolipin synthase subfamily. ClsA sub-subfamily.

It is found in the cell inner membrane. The catalysed reaction is 2 a 1,2-diacyl-sn-glycero-3-phospho-(1'-sn-glycerol) = a cardiolipin + glycerol. Functionally, catalyzes the reversible phosphatidyl group transfer from one phosphatidylglycerol molecule to another to form cardiolipin (CL) (diphosphatidylglycerol) and glycerol. The chain is Cardiolipin synthase A from Escherichia coli O157:H7 (strain EC4115 / EHEC).